Reading from the N-terminus, the 595-residue chain is MATELLCLHRPISLTHKLFRNPLPKVIQATPLTLKLRCSVSTENVSFTETETEARRSANYEPNSWDYDYLLSSDTDESIEVYKDKAKKLEAEVRREINNEKAEFLTLLELIDNVQRLGLGYRFESDIRGALDRFVSSGGFDAVTKTSLHGTALSFRLLRQHGFEVSQEAFSGFKDQNGNFLENLKEDIKAILSLYEASFLALEGENILDEAKVFAISHLKELSEEKIGKELAEQVNHALELPLHRRTQRLEAVWSIEAYRKKEDANQVLLELAILDYNMIQSVYQRDLRETSRWWRRVGLATKLHFARDRLIESFYWAVGVAFEPQYSDCRNSVAKMFSFVTIIDDIYDVYGTLDELELFTDAVERWDVNAINDLPDYMKLCFLALYNTINEIAYDNLKDKGENILPYLTKAWADLCNAFLQEAKWLYNKSTPTFDDYFGNAWKSSSGPLQLVFAYFAVVQNIKKEEIENLQKYHDTISRPSHIFRLCNDLASASAEIARGETANSVSCYMRTKGISEELATESVMNLIDETWKKMNKEKLGGSLFAKPFVETAINLARQSHCTYHNGDAHTSPDELTRKRVLSVITEPILPFER.

A chloroplast-targeting transit peptide spans 1-37 (MATELLCLHRPISLTHKLFRNPLPKVIQATPLTLKLR). Asp-345 lines the dimethylallyl diphosphate pocket. Asp-345 and Asp-349 together coordinate Mg(2+). A DDXXD motif motif is present at residues 345–349 (DDIYD). The dimethylallyl diphosphate site is built by Glu-423, Arg-486, and Asn-489. 3 residues coordinate Mg(2+): Asn-489, Ser-493, and Glu-497.

It belongs to the terpene synthase family. Tpsb subfamily. Mg(2+) is required as a cofactor. As to expression, predominantly expressed in leaves.

It localises to the plastid. The protein localises to the chloroplast. It catalyses the reaction dimethylallyl diphosphate = isoprene + diphosphate. Its pathway is terpene metabolism. Its function is as follows. Lyase that catalyzes the formation of isoprene from dimethylallyl diphosphate, but not from isopentenyl diphosphate or geranyl diphosphate. The sequence is that of Isoprene synthase, chloroplastic from Populus alba (White poplar).